The primary structure comprises 282 residues: Protein NEOXANTHIN-DEFICIENT 1 (282 aa).

Functionally, required for neoxanthin biosynthesis. Probably not involved directly in the enzymatic conversion of violaxanthin to neoxanthin. Is necessary but not sufficient for neoxanthin synthesis. This is Protein NEOXANTHIN-DEFICIENT 1 from Arabidopsis thaliana (Mouse-ear cress).